The primary structure comprises 538 residues: Bifunctional purine biosynthesis protein PurH (538 aa).

In terms of domain architecture, MGS-like spans 6-158; that stretch reads KHIPAPDLHR…KNHAYVATVV (153 aa).

The protein belongs to the PurH family.

The enzyme catalyses (6R)-10-formyltetrahydrofolate + 5-amino-1-(5-phospho-beta-D-ribosyl)imidazole-4-carboxamide = 5-formamido-1-(5-phospho-D-ribosyl)imidazole-4-carboxamide + (6S)-5,6,7,8-tetrahydrofolate. It catalyses the reaction IMP + H2O = 5-formamido-1-(5-phospho-D-ribosyl)imidazole-4-carboxamide. Its pathway is purine metabolism; IMP biosynthesis via de novo pathway; 5-formamido-1-(5-phospho-D-ribosyl)imidazole-4-carboxamide from 5-amino-1-(5-phospho-D-ribosyl)imidazole-4-carboxamide (10-formyl THF route): step 1/1. It participates in purine metabolism; IMP biosynthesis via de novo pathway; IMP from 5-formamido-1-(5-phospho-D-ribosyl)imidazole-4-carboxamide: step 1/1. This chain is Bifunctional purine biosynthesis protein PurH, found in Brucella abortus (strain S19).